We begin with the raw amino-acid sequence, 917 residues long: Translation initiation factor IF-2 (917 aa).

The disordered stretch occupies residues 241 to 312 (EEAKKGTLHK…GGWRSGGGRK (72 aa)). Over residues 252-262 (AKAEGAEDKKK) the composition is skewed to basic and acidic residues. Polar residues predominate over residues 274–283 (SSETSSTWQE). The segment covering 298–308 (TSGGVGGWRSG) has biased composition (gly residues). Positions 415–582 (PRPPVVTVMG…NVLLQAEILE (168 aa)) constitute a tr-type G domain. Positions 424–431 (GHVDHGKT) are G1. 424 to 431 (GHVDHGKT) is a GTP binding site. The interval 449 to 453 (GITQH) is G2. Positions 470 to 473 (DTPG) are G3. GTP is bound by residues 470–474 (DTPGH) and 524–527 (NKID). Residues 524–527 (NKID) are G4. Residues 560-562 (SAK) are G5.

This sequence belongs to the TRAFAC class translation factor GTPase superfamily. Classic translation factor GTPase family. IF-2 subfamily.

The protein localises to the cytoplasm. In terms of biological role, one of the essential components for the initiation of protein synthesis. Protects formylmethionyl-tRNA from spontaneous hydrolysis and promotes its binding to the 30S ribosomal subunits. Also involved in the hydrolysis of GTP during the formation of the 70S ribosomal complex. The sequence is that of Translation initiation factor IF-2 from Polynucleobacter necessarius subsp. necessarius (strain STIR1).